The chain runs to 384 residues: Protein Brevis radix-like 4 (384 aa).

Disordered regions lie at residues 1 to 35 (MLTCIARSKRAGDESSGQPDDPDSKNAKSLTSQLK) and 50 to 78 (PCTAAQGQGQGQGPIKNNPSSSSVKSDFE). In terms of domain architecture, BRX 1 spans 150 to 205 (KEWVAQVEPGVLITFVSLPGGGNDLKRIRFSRDMFNKLQAQRWWADNYDKVMELYN). Disordered regions lie at residues 214 to 270 (FPLP…DHNS) and 304 to 325 (SIRSSSSRDADRSEEMSVSNAS). Positions 221 to 235 (RSEDENAKVEYHPED) are enriched in basic and acidic residues. Positions 260–270 (YSSSDSLDHNS) are enriched in polar residues. Positions 309-318 (SSRDADRSEE) are enriched in basic and acidic residues. In terms of domain architecture, BRX 2 spans 329 to 384 (NEWVEQDEPGVYITIKVLPGGKRELRRVRFSRERFGEMHARLWWEENRARIHEQYL).

It belongs to the BRX family. In terms of tissue distribution, expressed in roots.

Its subcellular location is the nucleus. In Arabidopsis thaliana (Mouse-ear cress), this protein is Protein Brevis radix-like 4 (BRXL4).